Here is a 292-residue protein sequence, read N- to C-terminus: Ribosomal protein L11 methyltransferase (292 aa).

Residues T144, G165, D187, and N229 each contribute to the S-adenosyl-L-methionine site.

The protein belongs to the methyltransferase superfamily. PrmA family.

It is found in the cytoplasm. The enzyme catalyses L-lysyl-[protein] + 3 S-adenosyl-L-methionine = N(6),N(6),N(6)-trimethyl-L-lysyl-[protein] + 3 S-adenosyl-L-homocysteine + 3 H(+). In terms of biological role, methylates ribosomal protein L11. The chain is Ribosomal protein L11 methyltransferase from Pseudomonas putida (strain GB-1).